The following is a 193-amino-acid chain: Probable gluconokinase (193 aa).

21–28 (GPAGSGKT) contributes to the ATP binding site.

Belongs to the gluconokinase GntK/GntV family.

The enzyme catalyses D-gluconate + ATP = 6-phospho-D-gluconate + ADP + H(+). Its pathway is carbohydrate acid metabolism; D-gluconate degradation. The chain is Probable gluconokinase from Schizosaccharomyces pombe (strain 972 / ATCC 24843) (Fission yeast).